We begin with the raw amino-acid sequence, 339 residues long: Protein-glutamate methylesterase/protein-glutamine glutaminase 2 (339 aa).

The Response regulatory domain maps to 2–119 (NIGIVNDLPL…GLSTDASPQA (118 aa)). The residue at position 53 (aspartate 53) is a 4-aspartylphosphate. A CheB-type methylesterase domain is found at 141–336 (PGPAPERGQP…PQLISRITRP (196 aa)). Active-site residues include serine 158, histidine 185, and aspartate 278.

It belongs to the CheB family. In terms of processing, phosphorylated by CheA. Phosphorylation of the N-terminal regulatory domain activates the methylesterase activity.

The protein localises to the cytoplasm. It catalyses the reaction [protein]-L-glutamate 5-O-methyl ester + H2O = L-glutamyl-[protein] + methanol + H(+). The catalysed reaction is L-glutaminyl-[protein] + H2O = L-glutamyl-[protein] + NH4(+). In terms of biological role, involved in chemotaxis. Part of a chemotaxis signal transduction system that modulates chemotaxis in response to various stimuli. Catalyzes the demethylation of specific methylglutamate residues introduced into the chemoreceptors (methyl-accepting chemotaxis proteins or MCP) by CheR. Also mediates the irreversible deamidation of specific glutamine residues to glutamic acid. The protein is Protein-glutamate methylesterase/protein-glutamine glutaminase 2 of Burkholderia lata (strain ATCC 17760 / DSM 23089 / LMG 22485 / NCIMB 9086 / R18194 / 383).